The sequence spans 136 residues: ATP synthase epsilon chain (136 aa).

The disordered stretch occupies residues 95 to 115 (DFSEAQSRLEEANKGSDRREQ). A compositionally biased stretch (basic and acidic residues) spans 101–115 (SRLEEANKGSDRREQ).

This sequence belongs to the ATPase epsilon chain family. In terms of assembly, F-type ATPases have 2 components, CF(1) - the catalytic core - and CF(0) - the membrane proton channel. CF(1) has five subunits: alpha(3), beta(3), gamma(1), delta(1), epsilon(1). CF(0) has three main subunits: a, b and c.

Its subcellular location is the cellular thylakoid membrane. Functionally, produces ATP from ADP in the presence of a proton gradient across the membrane. This is ATP synthase epsilon chain from Rippkaea orientalis (strain PCC 8801 / RF-1) (Cyanothece sp. (strain PCC 8801)).